The chain runs to 457 residues: PDZ and LIM domain protein 7 (457 aa).

Residues 1–85 form the PDZ domain; sequence MDSFKVVLEG…RLSLGLSRAQ (85 aa). Position 78 is a phosphoserine (S78). 2 disordered regions span residues 81 to 132 and 186 to 226; these read LSRA…LSQN and FMKK…PWAV. Position 96 is a phosphothreonine (T96). R103 carries the asymmetric dimethylarginine modification. Phosphoserine is present on S111. S247 carries the phosphoserine modification. 3 LIM zinc-binding domains span residues 280-338, 339-398, and 399-457; these read PVCH…VRYA, PSCA…MFGT, and KCRG…FSHV.

As to quaternary structure, binds via its LIM zinc-binding 3 domain (LIM 3) domain to endocytic codes of INSR, but not with those of IGF1R, LDLR, TFRC, or EGFR. Interacts with various PKC isoforms through the LIM zinc-binding domains. Binds to RET in a phosphorylation-independent manner via its LIM zinc-binding 2 domain (LIM 2). Probably part of a complex with SHC and the RET dimer. Interacts with TPM2, TBX4 and TBX5. Interacts (via LIM domains) with SIPA1L1. As to expression, expressed in kidney, heart, brain, lung, and skeletal muscle. Overexpression results in the synthesis of an unidentified soluble factor which acts on cells in the osteoblast lineage causing them to differentiate and secrete BMP-2.

It is found in the cytoplasm. Its subcellular location is the cytoskeleton. Its function is as follows. May function as a scaffold on which the coordinated assembly of proteins can occur. May play a role as an adapter that, via its PDZ domain, localizes LIM-binding proteins to actin filaments of both skeletal muscle and nonmuscle tissues. Involved in both of the two fundamental mechanisms of bone formation, direct bone formation (e.g. embryonic flat bones mandible and cranium), and endochondral bone formation (e.g. embryonic long bone development). Plays a role during fracture repair. Involved in BMP6 signaling pathway. The sequence is that of PDZ and LIM domain protein 7 (Pdlim7) from Rattus norvegicus (Rat).